The following is a 728-amino-acid chain: 1,4-alpha-glucan branching enzyme GlgB (728 aa).

Residue aspartate 405 is the Nucleophile of the active site. Glutamate 458 serves as the catalytic Proton donor.

It belongs to the glycosyl hydrolase 13 family. GlgB subfamily. In terms of assembly, monomer.

The catalysed reaction is Transfers a segment of a (1-&gt;4)-alpha-D-glucan chain to a primary hydroxy group in a similar glucan chain.. Its pathway is glycan biosynthesis; glycogen biosynthesis. In terms of biological role, catalyzes the formation of the alpha-1,6-glucosidic linkages in glycogen by scission of a 1,4-alpha-linked oligosaccharide from growing alpha-1,4-glucan chains and the subsequent attachment of the oligosaccharide to the alpha-1,6 position. This chain is 1,4-alpha-glucan branching enzyme GlgB, found in Klebsiella pneumoniae subsp. pneumoniae (strain ATCC 700721 / MGH 78578).